We begin with the raw amino-acid sequence, 276 residues long: Undecaprenyl-diphosphatase (276 aa).

6 consecutive transmembrane segments (helical) span residues 43 to 63 (RAMAFNIIIQLGAILAVVWEF), 85 to 105 (LNLLIAFMPAVVLGVIFADTI), 109 to 129 (LFNAITVATALVIGGVIMLWA), 183 to 203 (AATEFSFFLAMPTMVGAAVYS), 218 to 238 (VFAIGFVTSFIFAMIAVRGLL), and 254 to 274 (IAFGLLILATWQFGWIDWASA).

It belongs to the UppP family.

The protein resides in the cell inner membrane. The catalysed reaction is di-trans,octa-cis-undecaprenyl diphosphate + H2O = di-trans,octa-cis-undecaprenyl phosphate + phosphate + H(+). Functionally, catalyzes the dephosphorylation of undecaprenyl diphosphate (UPP). Confers resistance to bacitracin. The polypeptide is Undecaprenyl-diphosphatase (Pseudomonas syringae pv. syringae (strain B728a)).